A 594-amino-acid chain; its full sequence is UvrABC system protein C (594 aa).

The region spanning 13 to 99 (HSSGVYQYFD…IKQLKPKYNI (87 aa)) is the GIY-YIG domain. The UVR domain occupies 205–240 (DKLIKELELKMERLSNNLRFEEALIYRDRIAKIQKI).

Belongs to the UvrC family. In terms of assembly, interacts with UvrB in an incision complex.

Its subcellular location is the cytoplasm. In terms of biological role, the UvrABC repair system catalyzes the recognition and processing of DNA lesions. UvrC both incises the 5' and 3' sides of the lesion. The N-terminal half is responsible for the 3' incision and the C-terminal half is responsible for the 5' incision. This is UvrABC system protein C from Helicobacter pylori (strain HPAG1).